A 77-amino-acid polypeptide reads, in one-letter code: Liver-expressed antimicrobial peptide 2 (77 aa).

A signal peptide spans 1-22; it reads MWHLKLCAVLMIFLLLLGQTDG. Positions 23-37 are excised as a propeptide; the sequence is SPIPEVSSAKRRPRR. 2 disulfides stabilise this stretch: Cys-54–Cys-65 and Cys-60–Cys-70.

This sequence belongs to the LEAP2 family.

It is found in the secreted. In terms of biological role, has an antimicrobial activity. The polypeptide is Liver-expressed antimicrobial peptide 2 (LEAP2) (Macaca mulatta (Rhesus macaque)).